The chain runs to 194 residues: dCTP deaminase (194 aa).

DCTP contacts are provided by residues 110–115, aspartate 128, 136–138, tyrosine 171, lysine 178, and glutamine 182; these read RSSLAR and VLE. Glutamate 138 (proton donor/acceptor) is an active-site residue.

The protein belongs to the dCTP deaminase family. In terms of assembly, homotrimer.

The enzyme catalyses dCTP + H2O + H(+) = dUTP + NH4(+). The protein operates within pyrimidine metabolism; dUMP biosynthesis; dUMP from dCTP (dUTP route): step 1/2. In terms of biological role, catalyzes the deamination of dCTP to dUTP. The sequence is that of dCTP deaminase from Haemophilus ducreyi (strain 35000HP / ATCC 700724).